Reading from the N-terminus, the 356-residue chain is Caspase activity and apoptosis inhibitor 1 (356 aa).

The span at 1-14 (MTGKKSSREKRRKR) shows a compositional bias: basic residues. Disordered stretches follow at residues 1-24 (MTGKKSSREKRRKRSGQEAAASLA) and 54-80 (VAGGAERSERRKRRSTDSSSSVSGSLQ). Position 68 is a phosphoserine (S68). Residue T69 is modified to Phosphothreonine. K84 is covalently cross-linked (Glycyl lysine isopeptide (Lys-Gly) (interchain with G-Cter in SUMO2)). S100 and S183 each carry phosphoserine. The disordered stretch occupies residues 208-234 (DSTSSLRENKQPEVLESKQGKGEDSDV). Residues 214–231 (RENKQPEVLESKQGKGED) show a composition bias toward basic and acidic residues. A coiled-coil region spans residues 276–306 (ENTVQSEAGQIDDLERDIEKSVNEILGLAES). S307 carries the post-translational modification Phosphoserine.

Anti-apoptotic protein that modulates a caspase-10 dependent mitochondrial caspase-3/9 feedback amplification loop. In Mus musculus (Mouse), this protein is Caspase activity and apoptosis inhibitor 1 (Caap1).